The sequence spans 167 residues: MAHIEKQAGELQEKLIAVNRVSKTVKGGRIFSFTALTVVGDGNGRVGFGYGKAREVPAAIQKAMEKARRNMINVALNHGTLQHPVKGTHTGSRVFMQPASEGTGIIAGGAMRAVLEVAGVRNVLAKAYGSTNPINVVRATIDGLENMKSPDMVAAKRGKSVEEILGK.

Residues 11–74 (LQEKLIAVNR…EKARRNMINV (64 aa)) form the S5 DRBM domain.

It belongs to the universal ribosomal protein uS5 family. As to quaternary structure, part of the 30S ribosomal subunit. Contacts proteins S4 and S8.

With S4 and S12 plays an important role in translational accuracy. In terms of biological role, located at the back of the 30S subunit body where it stabilizes the conformation of the head with respect to the body. This Klebsiella pneumoniae subsp. pneumoniae (strain ATCC 700721 / MGH 78578) protein is Small ribosomal subunit protein uS5.